A 386-amino-acid polypeptide reads, in one-letter code: Acetate kinase (386 aa).

Mg(2+) is bound at residue N9. K16 serves as a coordination point for ATP. Residue R74 coordinates substrate. The active-site Proton donor/acceptor is the D131. ATP is bound by residues 191-195 (HLGNG), 265-267 (DFR), and 313-317 (GVGEN). E367 contributes to the Mg(2+) binding site.

It belongs to the acetokinase family. Homodimer. Requires Mg(2+) as cofactor. It depends on Mn(2+) as a cofactor.

It localises to the cytoplasm. The enzyme catalyses acetate + ATP = acetyl phosphate + ADP. Its pathway is metabolic intermediate biosynthesis; acetyl-CoA biosynthesis; acetyl-CoA from acetate: step 1/2. Catalyzes the formation of acetyl phosphate from acetate and ATP. Can also catalyze the reverse reaction. This is Acetate kinase from Mycolicibacterium gilvum (strain PYR-GCK) (Mycobacterium gilvum (strain PYR-GCK)).